The following is a 151-amino-acid chain: 3-hydroxyacyl-[acyl-carrier-protein] dehydratase FabZ (151 aa).

Residue His-49 is part of the active site.

Belongs to the thioester dehydratase family. FabZ subfamily.

The protein resides in the cytoplasm. It carries out the reaction a (3R)-hydroxyacyl-[ACP] = a (2E)-enoyl-[ACP] + H2O. Involved in unsaturated fatty acids biosynthesis. Catalyzes the dehydration of short chain beta-hydroxyacyl-ACPs and long chain saturated and unsaturated beta-hydroxyacyl-ACPs. The protein is 3-hydroxyacyl-[acyl-carrier-protein] dehydratase FabZ of Bordetella petrii (strain ATCC BAA-461 / DSM 12804 / CCUG 43448).